The sequence spans 194 residues: 7-methyl-GTP pyrophosphatase (194 aa).

The Proton acceptor role is filled by Asp-69.

Belongs to the Maf family. YceF subfamily. The cofactor is a divalent metal cation.

It localises to the cytoplasm. The enzyme catalyses N(7)-methyl-GTP + H2O = N(7)-methyl-GMP + diphosphate + H(+). Functionally, nucleoside triphosphate pyrophosphatase that hydrolyzes 7-methyl-GTP (m(7)GTP). May have a dual role in cell division arrest and in preventing the incorporation of modified nucleotides into cellular nucleic acids. The protein is 7-methyl-GTP pyrophosphatase (yceF1) of Shigella boydii serotype 4 (strain Sb227).